The following is a 699-amino-acid chain: D-(-)-3-hydroxybutyrate oligomer hydrolase (699 aa).

The signal sequence occupies residues 1–33 (MTAIRGGSRRAPGLALALLGGVLLGACHGDENA). Ser311 acts as the Charge relay system in catalysis.

It belongs to the D-(-)-3-hydroxybutyrate oligomer hydrolase family.

The protein localises to the secreted. It carries out the reaction (3R)-hydroxybutanoate dimer + H2O = 2 (R)-3-hydroxybutanoate + H(+). It participates in lipid metabolism; butanoate metabolism. Its function is as follows. Participates in the degradation of poly-3-hydroxybutyrate (PHB). It works downstream of poly(3-hydroxybutyrate) depolymerase, hydrolyzing D(-)-3-hydroxybutyrate oligomers of various length (3HB-oligomers) into 3HB-monomers. This is D-(-)-3-hydroxybutyrate oligomer hydrolase from Burkholderia mallei (strain SAVP1).